The following is a 181-amino-acid chain: tRNA (cytidine(56)-2'-O)-methyltransferase (181 aa).

Residues Leu-88, 115–119, and 133–140 contribute to the S-adenosyl-L-methionine site; these read GGEKV and IGNQPHSE.

The protein belongs to the aTrm56 family. As to quaternary structure, homodimer.

It is found in the cytoplasm. The enzyme catalyses cytidine(56) in tRNA + S-adenosyl-L-methionine = 2'-O-methylcytidine(56) in tRNA + S-adenosyl-L-homocysteine + H(+). Specifically catalyzes the AdoMet-dependent 2'-O-ribose methylation of cytidine at position 56 in tRNAs. This is tRNA (cytidine(56)-2'-O)-methyltransferase from Thermofilum pendens (strain DSM 2475 / Hrk 5).